Consider the following 190-residue polypeptide: uncharacterized protein (190 aa).

2 disordered regions span residues Met-1–Gly-21 and Pro-155–Ser-190. Residues Ser-181 to Ser-190 show a composition bias toward low complexity.

This is an uncharacterized protein from Homo sapiens (Human).